The chain runs to 207 residues: Adenine phosphoribosyltransferase (207 aa).

Residues 1–33 (MRPAKPPQSKERKRSKSLTSADHDNSPQRAETA) are disordered.

The protein belongs to the purine/pyrimidine phosphoribosyltransferase family. As to quaternary structure, homodimer.

Its subcellular location is the cytoplasm. The enzyme catalyses AMP + diphosphate = 5-phospho-alpha-D-ribose 1-diphosphate + adenine. The protein operates within purine metabolism; AMP biosynthesis via salvage pathway; AMP from adenine: step 1/1. Catalyzes a salvage reaction resulting in the formation of AMP, that is energically less costly than de novo synthesis. The chain is Adenine phosphoribosyltransferase from Corynebacterium jeikeium (strain K411).